The primary structure comprises 118 residues: Holo-[acyl-carrier-protein] synthase (118 aa).

Residues Asp-8 and Glu-58 each contribute to the Mg(2+) site.

Belongs to the P-Pant transferase superfamily. AcpS family. It depends on Mg(2+) as a cofactor.

The protein localises to the cytoplasm. The catalysed reaction is apo-[ACP] + CoA = holo-[ACP] + adenosine 3',5'-bisphosphate + H(+). Functionally, transfers the 4'-phosphopantetheine moiety from coenzyme A to a Ser of acyl-carrier-protein. The chain is Holo-[acyl-carrier-protein] synthase from Listeria monocytogenes serotype 4a (strain HCC23).